We begin with the raw amino-acid sequence, 507 residues long: Histidine ammonia-lyase (507 aa).

Residues 143 to 145 (SSG) constitute a cross-link (5-imidazolinone (Ser-Gly)). 2,3-didehydroalanine (Ser) is present on Ser144.

The protein belongs to the PAL/histidase family. Contains an active site 4-methylidene-imidazol-5-one (MIO), which is formed autocatalytically by cyclization and dehydration of residues Ser-Ser-Gly.

It is found in the cytoplasm. It catalyses the reaction L-histidine = trans-urocanate + NH4(+). Its pathway is amino-acid degradation; L-histidine degradation into L-glutamate; N-formimidoyl-L-glutamate from L-histidine: step 1/3. This Alkaliphilus metalliredigens (strain QYMF) protein is Histidine ammonia-lyase.